Consider the following 236-residue polypeptide: 2,3,4,5-tetrahydropyridine-2,6-dicarboxylate N-acetyltransferase (236 aa).

It belongs to the transferase hexapeptide repeat family. DapH subfamily.

It catalyses the reaction (S)-2,3,4,5-tetrahydrodipicolinate + acetyl-CoA + H2O = L-2-acetamido-6-oxoheptanedioate + CoA. It functions in the pathway amino-acid biosynthesis; L-lysine biosynthesis via DAP pathway; LL-2,6-diaminopimelate from (S)-tetrahydrodipicolinate (acetylase route): step 1/3. Its function is as follows. Catalyzes the transfer of an acetyl group from acetyl-CoA to tetrahydrodipicolinate. The protein is 2,3,4,5-tetrahydropyridine-2,6-dicarboxylate N-acetyltransferase of Clostridium botulinum (strain Okra / Type B1).